A 454-amino-acid chain; its full sequence is Tryptophanase (454 aa).

Lysine 256 bears the N6-(pyridoxal phosphate)lysine mark.

Belongs to the beta-eliminating lyase family. Homotetramer. Pyridoxal 5'-phosphate is required as a cofactor.

The catalysed reaction is L-tryptophan + H2O = indole + pyruvate + NH4(+). It participates in amino-acid degradation; L-tryptophan degradation via pyruvate pathway; indole and pyruvate from L-tryptophan: step 1/1. The protein is Tryptophanase (tnaA) of Rhodobacter capsulatus (Rhodopseudomonas capsulata).